The primary structure comprises 457 residues: Zinc finger protein ZIPIC (457 aa).

A ZAD domain is found at 3 to 84 (CCICQFSVRV…ILELIHSPYM (82 aa)). 6 consecutive C2H2-type zinc fingers follow at residues 257 to 280 (IQCP…KREH), 284 to 306 (YVCD…LQNH), 312 to 334 (FACP…MAWH), 340 to 362 (YQCD…KMIH), 369 to 391 (LECQ…MRSH), and 397 to 419 (FACP…LREH). Residues 430–448 (FHCSKCTHTFINEQNYDAH) form a C2H2-type 7; degenerate zinc finger.

As to quaternary structure, interacts (via region between the ZAD domain and the first zinc finger domain) with Cp190 (via centrosomal targeting M domain); the interaction is direct. Interacts with pita.

It is found in the nucleus. Its subcellular location is the chromosome. Its function is as follows. Insulator DNA-binding protein. Recruits Cp190 and cooperatively binds to chromatin promoter regions to exert transcriptional regulator and chromatin insulator functions. Chromatin insulators are regulatory elements that establish independent domains of transcriptional activity within eukaryotic genomes. Insulators are proposed to structure the chromatin fiber into independent domains of differing transcriptional potential by promoting the formation of distinct chromatin loops to form topologically associating domains (TADs). Chromatin binding sites often cluster with those of other insulator DNA-binding proteins such as pita, CTCF and BEAF-32, but not Su(Hw). This chain is Zinc finger protein ZIPIC, found in Drosophila melanogaster (Fruit fly).